A 492-amino-acid polypeptide reads, in one-letter code: Bifunctional purine biosynthesis protein PurH (492 aa).

An MGS-like domain is found at 1–144; it reads MKKAILSVSN…KNYKHVTTIV (144 aa).

Belongs to the PurH family.

The catalysed reaction is (6R)-10-formyltetrahydrofolate + 5-amino-1-(5-phospho-beta-D-ribosyl)imidazole-4-carboxamide = 5-formamido-1-(5-phospho-D-ribosyl)imidazole-4-carboxamide + (6S)-5,6,7,8-tetrahydrofolate. The enzyme catalyses IMP + H2O = 5-formamido-1-(5-phospho-D-ribosyl)imidazole-4-carboxamide. It participates in purine metabolism; IMP biosynthesis via de novo pathway; 5-formamido-1-(5-phospho-D-ribosyl)imidazole-4-carboxamide from 5-amino-1-(5-phospho-D-ribosyl)imidazole-4-carboxamide (10-formyl THF route): step 1/1. The protein operates within purine metabolism; IMP biosynthesis via de novo pathway; IMP from 5-formamido-1-(5-phospho-D-ribosyl)imidazole-4-carboxamide: step 1/1. The chain is Bifunctional purine biosynthesis protein PurH from Staphylococcus aureus (strain bovine RF122 / ET3-1).